A 60-amino-acid polypeptide reads, in one-letter code: Large ribosomal subunit protein uL30 (60 aa).

This sequence belongs to the universal ribosomal protein uL30 family. In terms of assembly, part of the 50S ribosomal subunit.

The chain is Large ribosomal subunit protein uL30 from Dehalococcoides mccartyi (strain ATCC BAA-2100 / JCM 16839 / KCTC 5957 / BAV1).